Consider the following 65-residue polypeptide: Carboxypeptidase A inhibitor (65 aa).

Belongs to the protease inhibitor I44 family.

Its subcellular location is the secreted. Inhibits carboxypeptidase A. The polypeptide is Carboxypeptidase A inhibitor (Ascaris suum (Pig roundworm)).